A 73-amino-acid chain; its full sequence is Large ribosomal subunit protein bL31 (73 aa).

It belongs to the bacterial ribosomal protein bL31 family. Type A subfamily. As to quaternary structure, part of the 50S ribosomal subunit.

In terms of biological role, binds the 23S rRNA. This Agrobacterium fabrum (strain C58 / ATCC 33970) (Agrobacterium tumefaciens (strain C58)) protein is Large ribosomal subunit protein bL31.